Here is a 286-residue protein sequence, read N- to C-terminus: uncharacterized protein (286 aa).

The disordered stretch occupies residues 152 to 182 (YPSTTTSVTPGKKGEKTTKVDGFSSPLNQDT). The chain crosses the membrane as a helical span at residues 198–218 (VLIAVTLFVSGIAITVFVIFE). Positions 239–278 (RRPRKEDQQPGTAESQSDTQPKKVGQEAPNSSSPKKAVEI) are disordered. Residues 247–257 (QPGTAESQSDT) are compositionally biased toward polar residues.

It is found in the membrane. This is an uncharacterized protein from Bos taurus (Bovine).